The chain runs to 386 residues: Small ribosomal subunit protein mS31 (386 aa).

It belongs to the mitochondrion-specific ribosomal protein mS31 family. In terms of assembly, component of the mitochondrial ribosome small subunit (28S) which comprises a 12S rRNA and about 30 distinct proteins.

The protein localises to the mitochondrion. The sequence is that of Small ribosomal subunit protein mS31 (MRPS31) from Bos taurus (Bovine).